The following is a 302-amino-acid chain: Sulfotransferase 1C4 (302 aa).

55-60 contributes to the 3'-phosphoadenylyl sulfate binding site; the sequence is KAGTTW. 113 to 115 lines the substrate pocket; sequence KTH. H115 functions as the Proton acceptor in the catalytic mechanism. Residues R137, S145, Y200, 234–239, and 262–266 contribute to the 3'-phosphoadenylyl sulfate site; these read TSFDVM and FMRKG.

It belongs to the sulfotransferase 1 family. In terms of tissue distribution, expressed in liver, kidney and jejunum.

It localises to the cytoplasm. The protein localises to the cytosol. It carries out the reaction a phenol + 3'-phosphoadenylyl sulfate = an aryl sulfate + adenosine 3',5'-bisphosphate + H(+). The enzyme catalyses 17beta-estradiol + 3'-phosphoadenylyl sulfate = 17beta-estradiol 3-sulfate + adenosine 3',5'-bisphosphate + H(+). The catalysed reaction is bisphenol A + 3'-phosphoadenylyl sulfate = bisphenyl A sulfate + adenosine 3',5'-bisphosphate + H(+). In terms of biological role, sulfotransferase that utilizes 3'-phospho-5'-adenylyl sulfate (PAPS) as sulfonate donor to catalyze the sulfate conjugation of phenolic compounds and estrogen (E2). Can also sulfonate estrogenic compounds, however, the dietary flavonoids (phytoestrogen) and environmental estrogens, like bisphenol A are better substrates than 17beta-estradiol (E2). The chain is Sulfotransferase 1C4 (SULT1C4) from Macaca fascicularis (Crab-eating macaque).